The chain runs to 359 residues: UPF0283 membrane protein RL2646 (359 aa).

A disordered region spans residues 1 to 48; the sequence is MSKPPSDPPRRAPAAFIYEDEATERRDNGRQGGERRKPESFSEHIVVT. A compositionally biased stretch (basic and acidic residues) spans 23-42; the sequence is TERRDNGRQGGERRKPESFS. Helical transmembrane passes span 77–97 and 111–131; these read FGKI…GLWT and LGYA…ALVI.

It belongs to the UPF0283 family.

It is found in the cell inner membrane. The polypeptide is UPF0283 membrane protein RL2646 (Rhizobium johnstonii (strain DSM 114642 / LMG 32736 / 3841) (Rhizobium leguminosarum bv. viciae)).